The following is a 233-amino-acid chain: 1-(5-phosphoribosyl)-5-[(5-phosphoribosylamino)methylideneamino] imidazole-4-carboxamide isomerase (233 aa).

Aspartate 8 functions as the Proton acceptor in the catalytic mechanism. Aspartate 125 functions as the Proton donor in the catalytic mechanism.

The protein belongs to the HisA/HisF family.

The protein localises to the cytoplasm. The enzyme catalyses 1-(5-phospho-beta-D-ribosyl)-5-[(5-phospho-beta-D-ribosylamino)methylideneamino]imidazole-4-carboxamide = 5-[(5-phospho-1-deoxy-D-ribulos-1-ylimino)methylamino]-1-(5-phospho-beta-D-ribosyl)imidazole-4-carboxamide. It functions in the pathway amino-acid biosynthesis; L-histidine biosynthesis; L-histidine from 5-phospho-alpha-D-ribose 1-diphosphate: step 4/9. This is 1-(5-phosphoribosyl)-5-[(5-phosphoribosylamino)methylideneamino] imidazole-4-carboxamide isomerase from Thermococcus kodakarensis (strain ATCC BAA-918 / JCM 12380 / KOD1) (Pyrococcus kodakaraensis (strain KOD1)).